The sequence spans 301 residues: uncharacterized protein (301 aa).

This is an uncharacterized protein from Escherichia coli (strain K12).